Here is a 512-residue protein sequence, read N- to C-terminus: Replication initiation protein (512 aa).

Its function is as follows. Essential for replication. Binds specifically to a 60-bp region corresponding to the putative origin of replication of pXO2. Also binds nonspecifically to single-stranded DNA with lower affinity. This Bacillus anthracis protein is Replication initiation protein (repS).